A 323-amino-acid polypeptide reads, in one-letter code: MSNIKIAGIGAYLPSLVVTNDRISEFVETSDEWIVQRTGMRERRISEGENTSDISTKAAKLALERAGIDAKDLELIIVATISPDMFIPSVACLVQSNLDASKAACFDISVACSGFVYGLETAKALMMSMNYKNALVVGAEVLSKVTDWTDRSTCILFGDGAGAAVLKRDEAPGIIKSYLRADGKKGEALTIGATDFDTPFSKEKKLAKRTIDMNGREILRFAVSAIDEAVTEVMKDTNVSFDDIKYIVPHQANYRIIKLAAEKLKLSEDKFYLNLEKVGNTSAATVPIALNEMYEKGLLNKGDKIILVAFGGGLTYAATLLEW.

Catalysis depends on residues C112 and H250. Residues 251-255 (QANYR) are ACP-binding. Residue N280 is part of the active site.

This sequence belongs to the thiolase-like superfamily. FabH family. Homodimer.

The protein localises to the cytoplasm. The enzyme catalyses malonyl-[ACP] + acetyl-CoA + H(+) = 3-oxobutanoyl-[ACP] + CO2 + CoA. Its pathway is lipid metabolism; fatty acid biosynthesis. In terms of biological role, catalyzes the condensation reaction of fatty acid synthesis by the addition to an acyl acceptor of two carbons from malonyl-ACP. Catalyzes the first condensation reaction which initiates fatty acid synthesis and may therefore play a role in governing the total rate of fatty acid production. Possesses both acetoacetyl-ACP synthase and acetyl transacylase activities. Its substrate specificity determines the biosynthesis of branched-chain and/or straight-chain of fatty acids. In Clostridium beijerinckii (strain ATCC 51743 / NCIMB 8052) (Clostridium acetobutylicum), this protein is Beta-ketoacyl-[acyl-carrier-protein] synthase III.